Here is a 247-residue protein sequence, read N- to C-terminus: Probable transcriptional regulatory protein LAF_0541 (247 aa).

Residues 1-22 (MSGHSKWHNIQGRKNAQDAKRG) form a disordered region.

Belongs to the TACO1 family.

It localises to the cytoplasm. The chain is Probable transcriptional regulatory protein LAF_0541 from Limosilactobacillus fermentum (strain NBRC 3956 / LMG 18251) (Lactobacillus fermentum).